Consider the following 182-residue polypeptide: Crossover junction endodeoxyribonuclease RuvC (182 aa).

Residues Asp7, Glu68, and Asp141 contribute to the active site. The Mg(2+) site is built by Asp7, Glu68, and Asp141.

The protein belongs to the RuvC family. Homodimer which binds Holliday junction (HJ) DNA. The HJ becomes 2-fold symmetrical on binding to RuvC with unstacked arms; it has a different conformation from HJ DNA in complex with RuvA. In the full resolvosome a probable DNA-RuvA(4)-RuvB(12)-RuvC(2) complex forms which resolves the HJ. Mg(2+) serves as cofactor.

Its subcellular location is the cytoplasm. The catalysed reaction is Endonucleolytic cleavage at a junction such as a reciprocal single-stranded crossover between two homologous DNA duplexes (Holliday junction).. The RuvA-RuvB-RuvC complex processes Holliday junction (HJ) DNA during genetic recombination and DNA repair. Endonuclease that resolves HJ intermediates. Cleaves cruciform DNA by making single-stranded nicks across the HJ at symmetrical positions within the homologous arms, yielding a 5'-phosphate and a 3'-hydroxyl group; requires a central core of homology in the junction. The consensus cleavage sequence is 5'-(A/T)TT(C/G)-3'. Cleavage occurs on the 3'-side of the TT dinucleotide at the point of strand exchange. HJ branch migration catalyzed by RuvA-RuvB allows RuvC to scan DNA until it finds its consensus sequence, where it cleaves and resolves the cruciform DNA. The protein is Crossover junction endodeoxyribonuclease RuvC of Thermobifida fusca (strain YX).